We begin with the raw amino-acid sequence, 371 residues long: uncharacterized protein (371 aa).

7 consecutive transmembrane segments (helical) span residues 9–29 (FTLD…VFLI), 58–78 (VLAF…FLAI), 98–118 (LIVA…SFIF), 133–153 (LAPF…VSVI), 159–179 (YDVN…ALAA), 183–203 (ISNF…IGDW), and 330–350 (IIEI…MVVV).

This sequence belongs to the MscS (TC 1.A.23) family.

The protein resides in the cell membrane. In terms of biological role, may play a role in resistance to osmotic downshock. This is an uncharacterized protein from Bacillus subtilis (strain 168).